Here is a 258-residue protein sequence, read N- to C-terminus: UPF0246 protein Sfri_2896 (258 aa).

It belongs to the UPF0246 family.

The chain is UPF0246 protein Sfri_2896 from Shewanella frigidimarina (strain NCIMB 400).